The primary structure comprises 259 residues: DNA-directed RNA polymerase 30 kDa polypeptide (259 aa).

The TFIIS-type zinc finger occupies 155–195 (YNTPCPNCKSRNTTPMMIQTRAADEPPLVRHACRDCKQHFK). Cys-159, Cys-162, Cys-187, and Cys-190 together coordinate Zn(2+). A disordered region spans residues 220-259 (EILPDNNPSPPESPEPASPIDDGLIRATFDRNDEPPEDDE). Pro residues predominate over residues 226–236 (NPSPPESPEPA).

This sequence belongs to the poxviridae DNA-directed RNA polymerase 30 kDa subunit family. The DNA-dependent RNA polymerase (vRNAP) consists of eight subunits encoded by early viral genes and termed according to their apparent molecular masses Rpo147, Rpo132, Rpo35, Rpo30, Rpo22, Rpo19, Rpo18, and Rpo7. The same holoenzyme, with the addition of the transcription-specificity factor RAP94, is used for early gene expression.

The protein resides in the virion. The protein localises to the host cytoplasm. It catalyses the reaction RNA(n) + a ribonucleoside 5'-triphosphate = RNA(n+1) + diphosphate. Its function is as follows. Part of the DNA-dependent RNA polymerase which catalyzes the transcription of viral DNA into RNA using the four ribonucleoside triphosphates as substrates. Responsible for the transcription of early, intermediate and late genes. DNA-dependent RNA polymerase associates with the early transcription factor (ETF), itself composed of OPG118 and OPG134, thereby allowing the early genes transcription. Late transcription, and probably also intermediate transcription, require newly synthesized RNA polymerase. In Homo sapiens (Human), this protein is DNA-directed RNA polymerase 30 kDa polypeptide (OPG066).